The sequence spans 279 residues: 2-dehydro-3-deoxyphosphooctonate aldolase (279 aa).

It belongs to the KdsA family.

It is found in the cytoplasm. The enzyme catalyses D-arabinose 5-phosphate + phosphoenolpyruvate + H2O = 3-deoxy-alpha-D-manno-2-octulosonate-8-phosphate + phosphate. Its pathway is carbohydrate biosynthesis; 3-deoxy-D-manno-octulosonate biosynthesis; 3-deoxy-D-manno-octulosonate from D-ribulose 5-phosphate: step 2/3. The protein operates within bacterial outer membrane biogenesis; lipopolysaccharide biosynthesis. This Methylobacillus flagellatus (strain ATCC 51484 / DSM 6875 / VKM B-1610 / KT) protein is 2-dehydro-3-deoxyphosphooctonate aldolase.